A 276-amino-acid polypeptide reads, in one-letter code: MIVIGRSIVHPYITNEYEPFAAEKQQILSIMAGNQEVYSFRTADELSFDLNLRVNIIISALELFQSGFQFRTFQQSFCNPQYWKRTSLGGFELLPNIPPSIAIQDIFKNGKLYGTECATAMIIIFYKALLSLYEEETFNRLFANLLLYTWDYDQDLRLITKNGGDLVPGDLVYFKNPQVNPATIEWQGENTIYLGNFFFYGHGVGVKTKEEIIYSLNERRVPYAFISAFLTDTITRIDSRIMSQYASSSTPQTSISFIPIRDDAIVATVGHTTTIY.

Belongs to the bacillus TGase family.

The enzyme catalyses L-glutaminyl-[protein] + L-lysyl-[protein] = [protein]-L-lysyl-N(6)-5-L-glutamyl-[protein] + NH4(+). In terms of biological role, probably plays a role in the assembly of the spore coat proteins by catalyzing epsilon-(gamma-glutamyl)lysine cross-links. The polypeptide is Protein-glutamine gamma-glutamyltransferase (Bacillus cereus (strain B4264)).